Consider the following 925-residue polypeptide: MQPSLIPSLLETAAARNGDGRVILYSQGNREDPRSITYRDLLETASKASVAVHNHQNYTPGAAVLLHFNNHLDNIVWFWAVLLAGCIPAITPAFSNNPVQRVANLEHLSSTLITDWCLTSQALLAEFAGQDAIEPVSVETLGWEKASPASNTASVKAKPTDTALLLFTSGSTGKSKAVCLSHFQIVSAIAGKLSVVPLPEQSSFLNWVGLDHVAAIIEIHLQALYADLDQVHVPGSDVISDPIWFLDLMATHRVSRTFAPNFFLARIRDALVQNARSASPRQWDLSGLRYVASGGEANTTKTCDDLSQLLKSFGAPLNVIVPGFGMTETCAGAIFNTNCPDYDKKHGLEYTSVGSCMPGIFMRVTNQQGDPLPPGEMGSLELAGPVVFRQYLNNPAATQESFTMDGWFKTGDCGTLDENGYLVLGGRAKETIIINGVKYSPHEIETAVEEHNIKGLSRSFTCCFSSLSPGAETEEIVLVYLPTYAPEDIPARAATADAISKVVLMSTGSRPHIIPLEQALLPKSTLGKLSRSKIKAAYERGEYRTHDSINRSLIARHRQATRASPKNDFEKGLLEIFLRSFKISEDEFDVQTPIFDVGIDSIELINLKRDIEQHLGFADATIPIIILLENTTVRELAAALDNLYRPKEYNPVVTLQAHGDKNPLWLVHPGAGEVLIFINLAKFITDRPVYALRARGFDEGEKPFDSIEDAVTSYYNGVKSKQPHGPYALAGYCYGSMLAFEVAKKLEENGDEVRFVGSFNLPPHIKMRMRELDWKECLLHLAYFLDLITQKRSRELAVELDGLDQDTILQAIIDEADKERYAQLSLSRPFLSRWADVAYELHRIAGDYDPDGRVASMDVFFSIPLAIAAASKSEWRNVHLSQWDDFTRSHVRFHDVPGEHYSMIGPEHVFAFQKILRSALAERGM.

The segment at 11 to 434 is adenylation (A) domain; it reads ETAAARNGDG…GGRAKETIII (424 aa). One can recognise a Carrier domain in the interval 564 to 644; sequence SPKNDFEKGL…ELAAALDNLY (81 aa). An O-(pantetheine 4'-phosphoryl)serine modification is found at Ser-601. Residues 663 to 923 form a thioesterase (TE) domain region; the sequence is PLWLVHPGAG…KILRSALAER (261 aa).

The protein belongs to the ATP-dependent AMP-binding enzyme family.

The protein localises to the cytoplasm. Nonribosomal peptide synthase; part of the gene cluster that mediates the biosynthesis of Asp-melanin, a pigment that confers resistance against UV light and hampers phagocytosis by soil amoeba. The nonribosomal peptide synthase melA converts 4-hydroxyphenylpyruvate (4-HPPA) to aspulvinone E. The tyrosinase tyrP then performs hydroxylations of both aromatic moieties of aspulvinone E. The product of tyrP is highly unstable, and, due to the high reactivity of methides and ortho-diquinones, the polymeric Asp-melanin forms spontaneously. In Aspergillus terreus, this protein is Aspulvinone E synthetase melA.